Reading from the N-terminus, the 310-residue chain is Protein translocase subunit SecF (310 aa).

6 helical membrane-spanning segments follow: residues 20–42 (FKKV…IGIY), 140–160 (IEAG…YIWV), 164–184 (WYFG…ALGF), 194–214 (LSTI…SVVI), 246–266 (ILTV…GGEA), and 272–292 (VLVF…SAPI).

It belongs to the SecD/SecF family. SecF subfamily. Forms a complex with SecD. Part of the essential Sec protein translocation apparatus which comprises SecA, SecYEG and auxiliary proteins SecDF-YajC and YidC.

It is found in the cell inner membrane. Part of the Sec protein translocase complex. Interacts with the SecYEG preprotein conducting channel. SecDF uses the proton motive force (PMF) to complete protein translocation after the ATP-dependent function of SecA. The protein is Protein translocase subunit SecF of Rickettsia canadensis (strain McKiel).